The following is a 443-amino-acid chain: Trihelix transcription factor ASIL2 (443 aa).

The tract at residues 1 to 82 is disordered; that stretch reads MEDDEDIRSQ…RPTGGGGRED (82 aa). Positions 38 to 48 are enriched in polar residues; sequence YSLTPPGNSSQ. The span at 64 to 78 shows a compositional bias: gly residues; it reads SGGGNNSSGRPTGGG. The Myb-like domain maps to 84 to 144; it reads WSEAATAVLI…QCKNRIDTVK (61 aa). Disordered regions lie at residues 238–350 and 413–443; these read FGGS…GNKW and RRMG…LGNN. A compositionally biased stretch (gly residues) spans 239–249; the sequence is GGSGGGGGGGS. Positions 271 to 286 are enriched in low complexity; it reads TLPQQGRTLPQQQQQG. Positions 290-303 match the Bipartite nuclear localization signal motif; it reads KRCSESKRWRFRKR. A compositionally biased stretch (basic and acidic residues) spans 333-350; the sequence is MKTEEKKKQDGDGVGNKW. A coiled-coil region spans residues 360 to 414; that stretch reads FGEAYEQTENAKLQQVVEMEKERMKFLKELELQRMQFFVKTQLEISQLKQQHGRR. Low complexity predominate over residues 428-443; it reads NNINAIVNNNNDLGNN.

The protein resides in the nucleus. Transcription regulator that may repress the maturation program during early embryogenesis. The sequence is that of Trihelix transcription factor ASIL2 from Arabidopsis thaliana (Mouse-ear cress).